Here is a 131-residue protein sequence, read N- to C-terminus: Hydrogenase maturation factor HypA (131 aa).

His-2 contributes to the Ni(2+) binding site. Zn(2+)-binding residues include Cys-74, Cys-77, Cys-91, and Cys-94.

This sequence belongs to the HypA/HybF family.

In terms of biological role, involved in the maturation of [NiFe] hydrogenases. Required for nickel insertion into the metal center of the hydrogenase. This Streptomyces avermitilis (strain ATCC 31267 / DSM 46492 / JCM 5070 / NBRC 14893 / NCIMB 12804 / NRRL 8165 / MA-4680) protein is Hydrogenase maturation factor HypA.